The sequence spans 427 residues: Phosphatidylserine decarboxylase proenzyme 1, mitochondrial (427 aa).

A mitochondrion-targeting transit peptide spans 1–77 (MRSYLRFSDR…RRFVYKLDQA (77 aa)). Residues 78–88 (VTAALGPNGRY) are Mitochondrial matrix-facing. The chain crosses the membrane as a helical span at residues 89-107 (IAMVGMTASAVLLTFHYKF). Over 108-427 (REVIAATDNV…TEDERLFAFY (320 aa)) the chain is Mitochondrial intermembrane. Catalysis depends on charge relay system; for autoendoproteolytic cleavage activity residues aspartate 210, histidine 268, and serine 379. The active-site Schiff-base intermediate with substrate; via pyruvic acid; for decarboxylase activity is serine 379. Serine 379 is subject to Pyruvic acid (Ser); by autocatalysis.

Belongs to the phosphatidylserine decarboxylase family. PSD-B subfamily. Eukaryotic type I sub-subfamily. In terms of assembly, heterodimer of a large membrane-associated beta subunit and a small pyruvoyl-containing alpha subunit. It depends on pyruvate as a cofactor. In terms of processing, is synthesized initially as an inactive proenzyme. Formation of the active enzyme involves a self-maturation process in which the active site pyruvoyl group is generated from an internal serine residue via an autocatalytic post-translational modification. Two non-identical subunits are generated from the proenzyme in this reaction, and the pyruvate is formed at the N-terminus of the alpha chain, which is derived from the carboxyl end of the proenzyme. The autoendoproteolytic cleavage occurs by a canonical serine protease mechanism, in which the side chain hydroxyl group of the serine supplies its oxygen atom to form the C-terminus of the beta chain, while the remainder of the serine residue undergoes an oxidative deamination to produce ammonia and the pyruvoyl prosthetic group on the alpha chain. During this reaction, the Ser that is part of the protease active site of the proenzyme becomes the pyruvoyl prosthetic group, which constitutes an essential element of the active site of the mature decarboxylase.

Its subcellular location is the mitochondrion. It localises to the mitochondrion inner membrane. The enzyme catalyses a 1,2-diacyl-sn-glycero-3-phospho-L-serine + H(+) = a 1,2-diacyl-sn-glycero-3-phosphoethanolamine + CO2. It participates in phospholipid metabolism; phosphatidylethanolamine biosynthesis; phosphatidylethanolamine from CDP-diacylglycerol: step 2/2. Functionally, catalyzes the formation of phosphatidylethanolamine (PtdEtn) from phosphatidylserine (PtdSer). Plays a central role in phospholipid metabolism and in the interorganelle trafficking of phosphatidylserine. In Toxoplasma gondii (strain ATCC 50853 / GT1), this protein is Phosphatidylserine decarboxylase proenzyme 1, mitochondrial.